A 133-amino-acid chain; its full sequence is Large ribosomal subunit protein uL15 (133 aa).

The disordered stretch occupies residues 1–57; the sequence is MALEKLTPAAGSTHATKRIGRGQGSGNGKTAGKGNKGQRARKGYNEKRGFEGGQQPL. Over residues 21-35 the composition is skewed to gly residues; that stretch reads RGQGSGNGKTAGKGN.

The protein belongs to the universal ribosomal protein uL15 family. In terms of assembly, part of the 50S ribosomal subunit.

Its function is as follows. Binds to the 23S rRNA. This chain is Large ribosomal subunit protein uL15, found in Campylobacter concisus (strain 13826).